The sequence spans 106 residues: Cytochrome c oxidase assembly protein COX16 homolog, mitochondrial (106 aa).

The Mitochondrial matrix segment spans residues 1-15 (MIAPAVLRALRKNKT). The chain crosses the membrane as a helical span at residues 16–33 (LRYGVPMLLLVVGGSFGL). Residues 34-106 (REFSQIRYDA…NPETLKPKTT (73 aa)) lie on the Mitochondrial intermembrane side of the membrane. The segment at 81–106 (IRGPRPWEDPQLLQGRNPETLKPKTT) is disordered.

This sequence belongs to the COX16 family. As to quaternary structure, associates with the MITRAC complex. Interacts with MT-CO2/COX; specifically interacts with newly synthesized MT-CO2/COX. Interacts with SCO1, SCO2 and COA6.

It is found in the mitochondrion inner membrane. Its function is as follows. Required for the assembly of the mitochondrial respiratory chain complex IV (CIV), also known as cytochrome c oxidase. Promotes the insertion of copper into the active site of cytochrome c oxidase subunit II (MT-CO2/COX2). Interacts specifically with newly synthesized MT-CO2/COX and its copper center-forming metallochaperones SCO1, SCO2 and COA6. Probably facilitates MT-CO2/COX2 association with the MITRAC assembly intermediate containing MT-CO1/COX1, thereby participating in merging the MT-CO1/COX1 and MT-CO2/COX2 assembly lines. This Mus musculus (Mouse) protein is Cytochrome c oxidase assembly protein COX16 homolog, mitochondrial.